The primary structure comprises 96 residues: MSRISMEQVKHVAHLARLAITEEEAKLFTEQLGDIIQFAEQLNELDTEGVEPTSHVLDMKNVLREDKPEKGLPVEDVLKNAPDHEDGQIRVPSVLE.

This sequence belongs to the GatC family. In terms of assembly, heterotrimer of A, B and C subunits.

It catalyses the reaction L-glutamyl-tRNA(Gln) + L-glutamine + ATP + H2O = L-glutaminyl-tRNA(Gln) + L-glutamate + ADP + phosphate + H(+). The catalysed reaction is L-aspartyl-tRNA(Asn) + L-glutamine + ATP + H2O = L-asparaginyl-tRNA(Asn) + L-glutamate + ADP + phosphate + 2 H(+). In terms of biological role, allows the formation of correctly charged Asn-tRNA(Asn) or Gln-tRNA(Gln) through the transamidation of misacylated Asp-tRNA(Asn) or Glu-tRNA(Gln) in organisms which lack either or both of asparaginyl-tRNA or glutaminyl-tRNA synthetases. The reaction takes place in the presence of glutamine and ATP through an activated phospho-Asp-tRNA(Asn) or phospho-Glu-tRNA(Gln). The protein is Glutamyl-tRNA(Gln) amidotransferase subunit C of Halalkalibacterium halodurans (strain ATCC BAA-125 / DSM 18197 / FERM 7344 / JCM 9153 / C-125) (Bacillus halodurans).